A 650-amino-acid polypeptide reads, in one-letter code: Chaperone protein DnaK (650 aa).

Position 200 is a phosphothreonine; by autocatalysis (T200).

It belongs to the heat shock protein 70 family.

Its function is as follows. Acts as a chaperone. In Burkholderia orbicola (strain MC0-3), this protein is Chaperone protein DnaK.